A 138-amino-acid chain; its full sequence is Putative pre-16S rRNA nuclease (138 aa).

The protein belongs to the YqgF nuclease family.

Its subcellular location is the cytoplasm. Its function is as follows. Could be a nuclease involved in processing of the 5'-end of pre-16S rRNA. The polypeptide is Putative pre-16S rRNA nuclease (Citrobacter koseri (strain ATCC BAA-895 / CDC 4225-83 / SGSC4696)).